The following is a 712-amino-acid chain: Polyribonucleotide nucleotidyltransferase (712 aa).

2 residues coordinate Mg(2+): D487 and D493. One can recognise a KH domain in the interval 554-613 (PKIITMTINPDKIRDVIGPSGKQINKIIEETGVKIDIEQDGTVFISSINQEMNDKAKKII). Residues 623 to 691 (GEIYEGKVKR…KQGRVNLSRK (69 aa)) enclose the S1 motif domain.

The protein belongs to the polyribonucleotide nucleotidyltransferase family. Mg(2+) serves as cofactor.

The protein resides in the cytoplasm. The catalysed reaction is RNA(n+1) + phosphate = RNA(n) + a ribonucleoside 5'-diphosphate. Its function is as follows. Involved in mRNA degradation. Catalyzes the phosphorolysis of single-stranded polyribonucleotides processively in the 3'- to 5'-direction. This is Polyribonucleotide nucleotidyltransferase from Bacillus anthracis (strain CDC 684 / NRRL 3495).